The sequence spans 142 residues: Large-conductance mechanosensitive channel (142 aa).

A run of 3 helical transmembrane segments spans residues 10–30 (FAVK…GAFG), 40–60 (LIMP…LFVV), and 86–106 (GNFI…FMMV).

Belongs to the MscL family. In terms of assembly, homopentamer.

Its subcellular location is the cell inner membrane. Functionally, channel that opens in response to stretch forces in the membrane lipid bilayer. May participate in the regulation of osmotic pressure changes within the cell. In Delftia acidovorans (strain DSM 14801 / SPH-1), this protein is Large-conductance mechanosensitive channel.